Here is a 435-residue protein sequence, read N- to C-terminus: Adenylosuccinate synthetase (435 aa).

Residues 17–23 (GDEGKGK) and 45–47 (GHT) each bind GTP. D18 serves as the catalytic Proton acceptor. Mg(2+)-binding residues include D18 and G45. IMP contacts are provided by residues 18-21 (DEGK), 43-46 (NAGH), T134, R148, Q229, T244, and R308. H46 acts as the Proton donor in catalysis. Residue 304–310 (SVTGRPR) coordinates substrate. GTP-binding positions include R310, 336 to 338 (KLD), and 418 to 420 (STG).

This sequence belongs to the adenylosuccinate synthetase family. As to quaternary structure, homodimer. It depends on Mg(2+) as a cofactor.

Its subcellular location is the cytoplasm. The catalysed reaction is IMP + L-aspartate + GTP = N(6)-(1,2-dicarboxyethyl)-AMP + GDP + phosphate + 2 H(+). It functions in the pathway purine metabolism; AMP biosynthesis via de novo pathway; AMP from IMP: step 1/2. Its function is as follows. Plays an important role in the de novo pathway of purine nucleotide biosynthesis. Catalyzes the first committed step in the biosynthesis of AMP from IMP. The chain is Adenylosuccinate synthetase from Bordetella parapertussis (strain 12822 / ATCC BAA-587 / NCTC 13253).